A 31-amino-acid polypeptide reads, in one-letter code: Cliotide T11 (31 aa).

A cross-link (cyclopeptide (Gly-Asn)) is located at residues 1 to 31 (GIPCGESCVFIPCTITALLGCSCKDKVCYKN). Cystine bridges form between Cys4-Cys21, Cys8-Cys23, and Cys13-Cys28.

In terms of processing, contains 3 disulfide bonds. Post-translationally, this is a cyclic peptide. In terms of tissue distribution, expressed in seed but not in root, nodule, flower, stem, shoot, leaf and pod (at protein level).

In terms of biological role, probably participates in a plant defense mechanism. The polypeptide is Cliotide T11 (Clitoria ternatea (Butterfly pea)).